A 90-amino-acid polypeptide reads, in one-letter code: RNA-binding protein Hfq (90 aa).

The 60-residue stretch at 9–68 (DPFLNALRRERVPVSIYLVNGIKLQGQVESFDQFVILLKNTVSQMVYKHAISTVVPARPF) folds into the Sm domain.

It belongs to the Hfq family. Homohexamer.

Functionally, RNA chaperone that binds small regulatory RNA (sRNAs) and mRNAs to facilitate mRNA translational regulation in response to envelope stress, environmental stress and changes in metabolite concentrations. Also binds with high specificity to tRNAs. In Shewanella baltica (strain OS155 / ATCC BAA-1091), this protein is RNA-binding protein Hfq.